The sequence spans 426 residues: Anhydromevalonate phosphate decarboxylase (426 aa).

Mn(2+)-binding residues include Asn148 and Glu211. The Proton acceptor role is filled by Asp255.

It belongs to the UbiD family. It depends on prenylated FMN as a cofactor. Mn(2+) serves as cofactor.

The catalysed reaction is (2E)-3-methyl-5-phosphooxypent-2-enoate + H(+) = isopentenyl phosphate + CO2. The protein operates within isoprenoid biosynthesis; isopentenyl diphosphate biosynthesis via mevalonate pathway. In terms of biological role, catalyzes the conversion of trans-anhydromevalonate 5-phosphate (tAHMP) into isopentenyl phosphate. Involved in the archaeal mevalonate (MVA) pathway, which provides fundamental precursors for isoprenoid biosynthesis, such as isopentenyl diphosphate (IPP) and dimethylallyl diphosphate (DMAPP). In Archaeoglobus fulgidus (strain ATCC 49558 / DSM 4304 / JCM 9628 / NBRC 100126 / VC-16), this protein is Anhydromevalonate phosphate decarboxylase.